Consider the following 246-residue polypeptide: Exosome complex component Rrp41 (246 aa).

Belongs to the RNase PH family. Rrp41 subfamily. As to quaternary structure, component of the archaeal exosome complex. Forms a hexameric ring-like arrangement composed of 3 Rrp41-Rrp42 heterodimers. The hexameric ring associates with a trimer of Rrp4 and/or Csl4 subunits.

It is found in the cytoplasm. Catalytic component of the exosome, which is a complex involved in RNA degradation. Has 3'-&gt;5' exoribonuclease activity. Can also synthesize heteromeric RNA-tails. This is Exosome complex component Rrp41 from Pyrobaculum arsenaticum (strain DSM 13514 / JCM 11321 / PZ6).